A 572-amino-acid polypeptide reads, in one-letter code: Galectin-3-binding protein B (572 aa).

The first 14 residues, 1–14 (MLLLWPLLFLQVSA), serve as a signal peptide directing secretion. An SRCR domain is found at 32 to 131 (VRLVGVIPSS…HKEDAGVICA (100 aa)). Cystine bridges form between C56/C120, C69/C130, and C100/C110. N135, N195, and N202 each carry an N-linked (GlcNAc...) asparagine glycan. Residues 164–231 (CDFTIAVRDL…LYTRQIDVST (68 aa)) form the BTB domain. The BACK domain occupies 270-372 (QVSMYEYGVR…IPVDKLYDIQ (103 aa)). N430 and N548 each carry an N-linked (GlcNAc...) asparagine glycan.

Its subcellular location is the secreted. The protein resides in the extracellular space. It is found in the extracellular matrix. In terms of biological role, promotes integrin-mediated cell adhesion. The polypeptide is Galectin-3-binding protein B (lgals3bpb) (Danio rerio (Zebrafish)).